The sequence spans 109 residues: Cysteine-rich venom protein 7 (109 aa).

The signal sequence occupies residues 1–21 (MSKVFVIILVALMVAISIASA). Cystine bridges form between cysteine 30–cysteine 47, cysteine 37–cysteine 52, cysteine 46–cysteine 58, cysteine 70–cysteine 90, and cysteine 78–cysteine 98.

Expressed by the venom gland.

The protein resides in the secreted. This is Cysteine-rich venom protein 7 from Pimpla hypochondriaca (Parasitoid wasp).